The following is a 102-amino-acid chain: MSLSFLLFSPFLPPCFSSISICLSVLSTVSFFFAFTIPHYVLRCGSVDEWHIHSSAEDFRTQRCVCAVKLSASLLGCLLACASWSLLLEVSRIKWHVGTAYS.

The signal sequence occupies residues 1–17 (MSLSFLLFSPFLPPCFS). Residues 18-38 (SISICLSVLSTVSFFFAFTIP) traverse the membrane as a helical segment. Topologically, residues 39–69 (HYVLRCGSVDEWHIHSSAEDFRTQRCVCAVK) are cytoplasmic. A helical transmembrane segment spans residues 70-90 (LSASLLGCLLACASWSLLLEV). The Extracellular segment spans residues 91–102 (SRIKWHVGTAYS).

The protein localises to the membrane. Functionally, involved in vacuolar trafficking. The protein is Hypersensitivity to hygromycin-B protein 1 of Saccharomyces cerevisiae (strain ATCC 204508 / S288c) (Baker's yeast).